Reading from the N-terminus, the 89-residue chain is Small ribosomal subunit protein uS17 (89 aa).

The protein belongs to the universal ribosomal protein uS17 family. As to quaternary structure, part of the 30S ribosomal subunit.

One of the primary rRNA binding proteins, it binds specifically to the 5'-end of 16S ribosomal RNA. The sequence is that of Small ribosomal subunit protein uS17 from Leptospira borgpetersenii serovar Hardjo-bovis (strain JB197).